The sequence spans 101 residues: Small ribosomal subunit protein uS10 (101 aa).

Belongs to the universal ribosomal protein uS10 family. As to quaternary structure, part of the 30S ribosomal subunit.

In terms of biological role, involved in the binding of tRNA to the ribosomes. This Ureaplasma parvum serovar 3 (strain ATCC 27815 / 27 / NCTC 11736) protein is Small ribosomal subunit protein uS10.